A 582-amino-acid polypeptide reads, in one-letter code: Putative G-protein coupled receptor B0244.10 (582 aa).

Transmembrane regions (helical) follow at residues 25-45, 70-90, 120-140, and 159-179; these read LYII…PLGL, ITFS…GFAV, WTFF…GLVI, and LLVQ…VFLT. An N-linked (GlcNAc...) asparagine glycan is attached at Asn190. The chain crosses the membrane as a helical span at residues 199–218; the sequence is LTLGKWFIALYRFLFQMTNI. Residues Asn221 and Asn237 are each glycosylated (N-linked (GlcNAc...) asparagine). A run of 5 helical transmembrane segments spans residues 253-273, 296-316, 329-349, 377-397, and 421-441; these read SLMI…AVLV, YIFV…IIII, TFAF…SLLG, IYII…PFGL, and WLLF…LLFV. An N-linked (GlcNAc...) asparagine glycan is attached at Asn457. 2 helical membrane passes run 475–495 and 513–533; these read TILV…AAFG and LIFP…TFLL. N-linked (GlcNAc...) asparagine glycosylation occurs at Asn538.

It belongs to the G-protein coupled receptor 1 family. B0244 subfamily.

The protein resides in the cell membrane. This is Putative G-protein coupled receptor B0244.10 from Caenorhabditis elegans.